The primary structure comprises 557 residues: Urocanate hydratase (557 aa).

The interval 1 to 20 is disordered; the sequence is MSNPRHNEREVRSPRGDELN. Residues 52 to 53, Gln-130, 176 to 178, Glu-196, Arg-201, 242 to 243, 263 to 267, 273 to 274, and Tyr-322 contribute to the NAD(+) site; these read GG, GMG, NA, QTSAH, and YL. Cys-410 is an active-site residue. Residue Gly-492 participates in NAD(+) binding.

Belongs to the urocanase family. NAD(+) serves as cofactor.

Its subcellular location is the cytoplasm. It carries out the reaction 4-imidazolone-5-propanoate = trans-urocanate + H2O. Its pathway is amino-acid degradation; L-histidine degradation into L-glutamate; N-formimidoyl-L-glutamate from L-histidine: step 2/3. Functionally, catalyzes the conversion of urocanate to 4-imidazolone-5-propionate. The polypeptide is Urocanate hydratase (Brucella canis (strain ATCC 23365 / NCTC 10854 / RM-666)).